A 212-amino-acid chain; its full sequence is RNA chaperone ProQ (212 aa).

Composition is skewed to basic and acidic residues over residues 102–124 (ALKE…EKAK) and 132–144 (RKAD…DKPK). Residues 102–149 (ALKESKERVFASRRTNTKEEKAKQPRRPAPRKADAAAKSDKPKAAPKA) are disordered.

It belongs to the ProQ family.

The protein localises to the cytoplasm. In terms of biological role, RNA chaperone with significant RNA binding, RNA strand exchange and RNA duplexing activities. In Aeromonas hydrophila subsp. hydrophila (strain ATCC 7966 / DSM 30187 / BCRC 13018 / CCUG 14551 / JCM 1027 / KCTC 2358 / NCIMB 9240 / NCTC 8049), this protein is RNA chaperone ProQ.